We begin with the raw amino-acid sequence, 775 residues long: MILDTDYITENGKPVIRVFKKENGEFKIEYDRTFEPYFYALLKDDSAIEDVKKVTAKRHGTVVKVKRAEKVQKKFLGRPIEVWKLYFNHPQDVPAIRDRIRAHPAVVDIYEYDIPFAKRYLIDKGLIPMEGDEELTMLAFDIETLYHEGEEFGTGPILMISYADGSEARVITWKKIDLPYVDVVSTEKEMIKRFLRVVREKDPDVLITYNGDNFDFAYLKKRCEELGIKFTLGRDGSEPKIQRMGDRFAVEVKGRIHFDLYPVIRRTINLPTYTLEAVYEAVFGKPKEKVYAEEIAQAWESGEGLERVARYSMEDAKVTYELGREFFPMEAQLSRLIGQSLWDVSRSSTGNLVEWFLLRKAYKRNELAPNKPDERELARRRGGYAGGYVKEPERGLWDNIVYLDFRSLYPSIIITHNVSPDTLNREGCKEYDVAPEVGHKFCKDFPGFIPSLLGDLLEERQKIKRKMKATVDPLEKKLLDYRQRAIKILANSFYGYYGYAKARWYCKECAESVTAWGREYIEMVIRELEEKFGFKVLYADTDGLHATIPGADAETVKKKAKEFLKYINPKLPGLLELEYEGFYVRGFFVTKKKYAVIDEEGKITTRGLEIVRRDWSEIAKETQARVLEAILKHGDVEEAVRIVKEVTEKLSKYEVPPEKLVIHEQITRDLRDYKATGPHVAVAKRLAARGVKIRPGTVISYIVLKGSGRIGDRAIPADEFDPTKHRYDAEYYIENQVLPAVERILKAFGYRKEDLRYQKTKQVGLGAWLKVKGKK.

Belongs to the DNA polymerase type-B family.

It carries out the reaction DNA(n) + a 2'-deoxyribonucleoside 5'-triphosphate = DNA(n+1) + diphosphate. The chain is DNA polymerase (pol) from Thermococcus sp. (strain 9oN-7).